A 134-amino-acid chain; its full sequence is uncharacterized protein (134 aa).

3 helical membrane-spanning segments follow: residues 9–29 (PYFL…HGTA), 49–69 (MLLV…LGLF), and 107–127 (ALLY…ACAL).

Belongs to the DoxX family.

The protein localises to the cell membrane. This is an uncharacterized protein from Haemophilus influenzae (strain ATCC 51907 / DSM 11121 / KW20 / Rd).